The following is a 503-amino-acid chain: Probable dolichyl pyrophosphate Man9GlcNAc2 alpha-1,3-glucosyltransferase (503 aa).

Over 1 to 46 (MKERIKDKAWRPQFIKLNNPDTSKKIVSQKSKKPEIVDLSSPGNND) the chain is Cytoplasmic. Residues 47 to 67 (LVTISILCVLLCFQLAISLNP) form a helical membrane-spanning segment. The Lumenal segment spans residues 68 to 151 (HSGESQPPMY…SRGYESIAHK (84 aa)). The helical transmembrane segment at 152–172 (LFMRLSAIIPFYIFYLPPLIF) threads the bilayer. The Cytoplasmic portion of the chain corresponds to 173–181 (YFTRSKKMS). The chain crosses the membrane as a helical span at residues 182-202 (PILYALALLYPSLLVIDNGHF). Residues 203–211 (QYNSISLGL) are Lumenal-facing. Residues 212–232 (FLATYMFLTKNFTIIGSILFV) form a helical membrane-spanning segment. Over 233 to 239 (AALNYKQ) the chain is Cytoplasmic. The helical transmembrane segment at 240–257 (MELYHALPVFVFILARSI) threads the bilayer. Topologically, residues 258–268 (NKTQLFNSFRR) are lumenal. Residues 269-289 (ILTIGLFVVGTFLIIWLPFLL) form a helical membrane-spanning segment. Topologically, residues 290–332 (TGTAKDVIIRVFPFNRGLYEDKVASFWCAFSFILKRLPLQSVQ) are cytoplasmic. The chain crosses the membrane as a helical span at residues 333-353 (IYISTALVLAGSAPSLLVLFL). Topologically, residues 354-359 (RPTEKQ) are lumenal. The chain crosses the membrane as a helical span at residues 360-379 (FRISLTATGLSFFLFSFHVH). Residues 380–382 (EKT) are Cytoplasmic-facing. Residues 383–403 (ILLAAVPALLLISEYTSLVIW) traverse the membrane as a helical segment. At 404-420 (FLNITNISIFSLCVKDN) the chain is on the lumenal side. Residues 421–441 (FALSLSFFFAYFVVSYAYTAP) form a helical membrane-spanning segment. Over 442–443 (RK) the chain is Cytoplasmic. The helical transmembrane segment at 444-464 (ISHILTILIGFAICILELYGP) threads the bilayer. At 465–474 (SNQRFPHIYQ) the chain is on the lumenal side. The chain crosses the membrane as a helical span at residues 475–495 (LANAFFSCVHFIYFLLYLSFA). Residues 496–503 (SFEKTKKE) are Cytoplasmic-facing.

It belongs to the ALG6/ALG8 glucosyltransferase family.

The protein localises to the endoplasmic reticulum membrane. It catalyses the reaction an alpha-D-Man-(1-&gt;2)-alpha-D-Man-(1-&gt;2)-alpha-D-Man-(1-&gt;3)-[alpha-D-Man-(1-&gt;2)-alpha-D-Man-(1-&gt;3)-[alpha-D-Man-(1-&gt;2)-alpha-D-Man-(1-&gt;6)]-alpha-D-Man-(1-&gt;6)]-beta-D-Man-(1-&gt;4)-beta-D-GlcNAc-(1-&gt;4)-alpha-D-GlcNAc-diphospho-di-trans,poly-cis-dolichol + a di-trans,poly-cis-dolichyl beta-D-glucosyl phosphate = an alpha-D-Glc-(1-&gt;3)-alpha-D-Man-(1-&gt;2)-alpha-D-Man-(1-&gt;2)-alpha-D-Man-(1-&gt;3)-[alpha-D-Man-(1-&gt;2)-alpha-D-Man-(1-&gt;3)-[alpha-D-Man-(1-&gt;2)-alpha-D-Man-(1-&gt;6)]-alpha-D-Man-(1-&gt;6)]-beta-D-Man-(1-&gt;4)-beta-D-GlcNAc-(1-&gt;4)-alpha-D-GlcNAc-diphospho-di-trans,poly-cis-dolichol + a di-trans,poly-cis-dolichyl phosphate + H(+). It functions in the pathway protein modification; protein glycosylation. Its function is as follows. Adds the first glucose residue to the lipid-linked oligosaccharide precursor for N-linked glycosylation. Transfers glucose from dolichyl phosphate glucose (Dol-P-Glc) onto the lipid-linked oligosaccharide Man(9)GlcNAc(2)-PP-Dol. This chain is Probable dolichyl pyrophosphate Man9GlcNAc2 alpha-1,3-glucosyltransferase, found in Caenorhabditis elegans.